Reading from the N-terminus, the 356-residue chain is Probable cytosolic iron-sulfur protein assembly protein 1 (356 aa).

6 WD repeats span residues 34 to 73 (GHKR…IRAE), 89 to 128 (GHDS…DYEC), 134 to 173 (EHSQ…DWYC), 179 to 218 (AHSS…ECVE), 244 to 291 (HFSG…ATLR), and 319 to 356 (AHGS…RIWT).

It belongs to the WD repeat CIA1 family.

Essential component of the cytosolic iron-sulfur (Fe/S) protein assembly machinery. Required for the maturation of extramitochondrial Fe/S proteins. This chain is Probable cytosolic iron-sulfur protein assembly protein 1, found in Malassezia globosa (strain ATCC MYA-4612 / CBS 7966) (Dandruff-associated fungus).